Here is an 810-residue protein sequence, read N- to C-terminus: Phenylalanine--tRNA ligase beta subunit (810 aa).

The 112-residue stretch at 39 to 150 (RSWAAGVVLG…LDLPSGSPVG (112 aa)) folds into the tRNA-binding domain. Positions 407–495 (RGEAIINLRL…RLYGYDHFCE (89 aa)) constitute a B5 domain. Mg(2+)-binding residues include Asp-473, Asp-479, Glu-482, and Glu-483. An FDX-ACB domain is found at 716 to 809 (SPYPAVARDL…LTKQFAVSLR (94 aa)).

It belongs to the phenylalanyl-tRNA synthetase beta subunit family. Type 1 subfamily. Tetramer of two alpha and two beta subunits. Mg(2+) is required as a cofactor.

The protein localises to the cytoplasm. It catalyses the reaction tRNA(Phe) + L-phenylalanine + ATP = L-phenylalanyl-tRNA(Phe) + AMP + diphosphate + H(+). This chain is Phenylalanine--tRNA ligase beta subunit (pheT), found in Synechocystis sp. (strain ATCC 27184 / PCC 6803 / Kazusa).